The primary structure comprises 391 residues: Probable tRNA sulfurtransferase (391 aa).

The THUMP domain maps to D60–R167. Residues L185–L186, H210–F211, R267, G289, and Q298 contribute to the ATP site.

The protein belongs to the ThiI family.

The protein localises to the cytoplasm. The enzyme catalyses [ThiI sulfur-carrier protein]-S-sulfanyl-L-cysteine + a uridine in tRNA + 2 reduced [2Fe-2S]-[ferredoxin] + ATP + H(+) = [ThiI sulfur-carrier protein]-L-cysteine + a 4-thiouridine in tRNA + 2 oxidized [2Fe-2S]-[ferredoxin] + AMP + diphosphate. It carries out the reaction [ThiS sulfur-carrier protein]-C-terminal Gly-Gly-AMP + S-sulfanyl-L-cysteinyl-[cysteine desulfurase] + AH2 = [ThiS sulfur-carrier protein]-C-terminal-Gly-aminoethanethioate + L-cysteinyl-[cysteine desulfurase] + A + AMP + 2 H(+). It participates in cofactor biosynthesis; thiamine diphosphate biosynthesis. Its function is as follows. Catalyzes the ATP-dependent transfer of a sulfur to tRNA to produce 4-thiouridine in position 8 of tRNAs, which functions as a near-UV photosensor. Also catalyzes the transfer of sulfur to the sulfur carrier protein ThiS, forming ThiS-thiocarboxylate. This is a step in the synthesis of thiazole, in the thiamine biosynthesis pathway. The sulfur is donated as persulfide by IscS. In Finegoldia magna (strain ATCC 29328 / DSM 20472 / WAL 2508) (Peptostreptococcus magnus), this protein is Probable tRNA sulfurtransferase.